The chain runs to 1030 residues: Semaphorin-6A (1030 aa).

An N-terminal signal peptide occupies residues 1 to 18; it reads MRSEALLLYFTLLHFAGA. At 19–649 the chain is on the extracellular side; sequence GFPEDSEPIS…KGHDQLVPVT (631 aa). Positions 24–512 constitute a Sema domain; that stretch reads SEPISISHGN…FSTCVIKVPL (489 aa). Asn-33, Asn-49, and Asn-65 each carry an N-linked (GlcNAc...) asparagine glycan. Disulfide bonds link Cys-107–Cys-117, Cys-135–Cys-144, Cys-258–Cys-369, and Cys-283–Cys-328. Asn-282 carries an N-linked (GlcNAc...) asparagine glycan. Residues Asn-434 and Asn-461 are each glycosylated (N-linked (GlcNAc...) asparagine). Disulfide bonds link Cys-477–Cys-506, Cys-515–Cys-533, Cys-521–Cys-568, and Cys-525–Cys-542. The chain crosses the membrane as a helical span at residues 650-670; the sequence is LLAIAVILAFVMGAVFSGITV. Residues 671-1030 are Cytoplasmic-facing; sequence YCVCDHRRKD…TSMKPNDACT (360 aa). Ser-698 is subject to Phosphoserine. Disordered stretches follow at residues 754-778, 860-897, and 912-1030; these read ALPTPESTPTLQQKRKPSRGSREWE, SSKSPNHGVNLVENLDSLPPKVPQREASLGPPGASLSQ, and YGVD…DACT. Over residues 920 to 936 the composition is skewed to polar residues; it reads YPTNSLTRSHQATTLKR. A compositionally biased stretch (low complexity) spans 937 to 952; that stretch reads NNTNSSNSSHLSRNQS. Ser-952 is subject to Phosphoserine. Composition is skewed to polar residues over residues 970 to 997 and 1018 to 1030; these read QVHSSQPSGQAVTVSRQPSLNAYNSLTR and PLSTSMKPNDACT.

This sequence belongs to the semaphorin family. Active as a homodimer or oligomer. The SEMA6A homodimer interacts with a PLXNA2 homodimer, giving rise to a heterotetramer. Interacts with EVL. As to quaternary structure, (Microbial infection) Interacts with P.sordellii toxin TcsL; semaphorins SEMA6A and SEMA6B constitute the major host receptors for TcsL in the vascular endothelium.

The protein localises to the cell membrane. Cell surface receptor for PLXNA2 that plays an important role in cell-cell signaling. Required for normal granule cell migration in the developing cerebellum. Promotes reorganization of the actin cytoskeleton and plays an important role in axon guidance in the developing central nervous system. Can act as repulsive axon guidance cue. Has repulsive action towards migrating granular neurons. May play a role in channeling sympathetic axons into the sympathetic chains and controlling the temporal sequence of sympathetic target innervation. Functionally, (Microbial infection) Acts as a receptor for P.sordellii toxin TcsL in the in the vascular endothelium. The chain is Semaphorin-6A (SEMA6A) from Homo sapiens (Human).